Here is a 251-residue protein sequence, read N- to C-terminus: Triosephosphate isomerase 1 (251 aa).

9–11 (NWK) provides a ligand contact to substrate. His95 (electrophile) is an active-site residue. The active-site Proton acceptor is the Glu167. Substrate is bound by residues Gly173, Ser213, and 234–235 (GG).

It belongs to the triosephosphate isomerase family. Homodimer.

It is found in the cytoplasm. It catalyses the reaction D-glyceraldehyde 3-phosphate = dihydroxyacetone phosphate. Its pathway is carbohydrate biosynthesis; gluconeogenesis. It participates in carbohydrate degradation; glycolysis; D-glyceraldehyde 3-phosphate from glycerone phosphate: step 1/1. Functionally, involved in the gluconeogenesis. Catalyzes stereospecifically the conversion of dihydroxyacetone phosphate (DHAP) to D-glyceraldehyde-3-phosphate (G3P). The protein is Triosephosphate isomerase 1 of Listeria innocua serovar 6a (strain ATCC BAA-680 / CLIP 11262).